The primary structure comprises 177 residues: Disulfide bond formation protein B (177 aa).

Residues 1–14 (MLALLKQFSEKRFV) are Cytoplasmic-facing. The helical transmembrane segment at 15–31 (WFLLAFSSLALESTALY) threads the bilayer. Residues 32-49 (FQYGMGLQPCVLCVYERL) are Periplasmic-facing. Cys-41 and Cys-44 are disulfide-bonded. The helical transmembrane segment at 50-65 (AMIGLFVAGIIALLQP) threads the bilayer. Topologically, residues 66–72 (LAFILRL) are cytoplasmic. A helical transmembrane segment spans residues 73-90 (IALALGLFSSIKGLLISF). Topologically, residues 91–145 (RHLDLQMNPAPWKQCEFIPNFPETLPFHQWFPFIFNPTGSCNESQWSLFGLTMVQ) are periplasmic. Cys-105 and Cys-131 form a disulfide bridge. A helical membrane pass occupies residues 146 to 164 (WLVVIFSLYVVILTLLLIA). The Cytoplasmic portion of the chain corresponds to 165 to 177 (QVIKTRKQRRLFN).

This sequence belongs to the DsbB family.

The protein localises to the cell inner membrane. Functionally, required for disulfide bond formation in some periplasmic proteins. Acts by oxidizing the DsbA protein. In Haemophilus influenzae (strain 86-028NP), this protein is Disulfide bond formation protein B.